A 304-amino-acid chain; its full sequence is Cell surface-binding protein OPG105 (304 aa).

The Alpha-carbonic anhydrase domain maps to 1-235 (MPQQLSPINI…NDDTQVYYSG (235 aa)). Residues 1–275 (MPQQLSPINI…YQKYIEENKT (275 aa)) are Virion surface-facing. The helical transmembrane segment at 276–294 (FAIIAIVFVFILTAILFFM) threads the bilayer. Topologically, residues 295–304 (SRRYSREKQN) are intravirion.

Belongs to the alpha-carbonic anhydrase family. Homodimer; disulfide-linked. In terms of processing, apparently non-glycosylated.

The protein resides in the virion membrane. Binds to chondroitin sulfate on the cell surface to provide virion attachment to target cell. In Homo sapiens (Human), this protein is Cell surface-binding protein OPG105 (OPG105).